A 120-amino-acid polypeptide reads, in one-letter code: Protein VraC (120 aa).

In Staphylococcus epidermidis (strain ATCC 35984 / DSM 28319 / BCRC 17069 / CCUG 31568 / BM 3577 / RP62A), this protein is Protein VraC.